A 96-amino-acid chain; its full sequence is Co-chaperonin GroES (96 aa).

The protein belongs to the GroES chaperonin family. In terms of assembly, heptamer of 7 subunits arranged in a ring. Interacts with the chaperonin GroEL.

The protein localises to the cytoplasm. In terms of biological role, together with the chaperonin GroEL, plays an essential role in assisting protein folding. The GroEL-GroES system forms a nano-cage that allows encapsulation of the non-native substrate proteins and provides a physical environment optimized to promote and accelerate protein folding. GroES binds to the apical surface of the GroEL ring, thereby capping the opening of the GroEL channel. This chain is Co-chaperonin GroES, found in Aggregatibacter actinomycetemcomitans (Actinobacillus actinomycetemcomitans).